A 325-amino-acid chain; its full sequence is uncharacterized protein (325 aa).

The interval 296–325 is disordered; sequence QRTLSSSMEEADRPRRMSVTQPHLPPVPSA.

It belongs to the NDRG family.

This is an uncharacterized protein from Caenorhabditis elegans.